We begin with the raw amino-acid sequence, 135 residues long: Large ribosomal subunit protein uL16c (135 aa).

The disordered stretch occupies residues 1–20 (MLSPKRTRFRKQHRGRMKGK).

Belongs to the universal ribosomal protein uL16 family. In terms of assembly, part of the 50S ribosomal subunit.

The protein localises to the plastid. The protein resides in the chloroplast. The protein is Large ribosomal subunit protein uL16c of Landoltia punctata (Dotted duckmeat).